The following is a 349-amino-acid chain: S-adenosylmethionine:tRNA ribosyltransferase-isomerase (349 aa).

Belongs to the QueA family. Monomer.

Its subcellular location is the cytoplasm. It carries out the reaction 7-aminomethyl-7-carbaguanosine(34) in tRNA + S-adenosyl-L-methionine = epoxyqueuosine(34) in tRNA + adenine + L-methionine + 2 H(+). It participates in tRNA modification; tRNA-queuosine biosynthesis. In terms of biological role, transfers and isomerizes the ribose moiety from AdoMet to the 7-aminomethyl group of 7-deazaguanine (preQ1-tRNA) to give epoxyqueuosine (oQ-tRNA). This is S-adenosylmethionine:tRNA ribosyltransferase-isomerase from Ruegeria pomeroyi (strain ATCC 700808 / DSM 15171 / DSS-3) (Silicibacter pomeroyi).